Here is a 231-residue protein sequence, read N- to C-terminus: Superoxide dismutase [Mn] 1, mitochondrial (231 aa).

The N-terminal 29 residues, 1-29, are a transit peptide targeting the mitochondrion; the sequence is MAIRCVASRKTLAGLKETSSRLLRIRGIQ. The Mn(2+) site is built by His-55 and His-103. The residue at position 124 (Ser-124) is a Phosphoserine. Mn(2+) contacts are provided by Asp-192 and His-196.

This sequence belongs to the iron/manganese superoxide dismutase family. As to quaternary structure, homotetramer. It depends on Mn(2+) as a cofactor.

It is found in the mitochondrion matrix. It catalyses the reaction 2 superoxide + 2 H(+) = H2O2 + O2. Its activity is regulated as follows. Activated by MTM1. Its function is as follows. Destroys superoxide anion radicals which are normally produced within the cells and which are toxic to biological systems. This chain is Superoxide dismutase [Mn] 1, mitochondrial (MSD1), found in Arabidopsis thaliana (Mouse-ear cress).